The primary structure comprises 257 residues: MVLIRVLANLLILQLSYAQKSSELVIGGDECNINEHRSLVVLFNSSGALCGGTLINQEWVLTAAHCDMPNMQIYLGVHSASVPNDDEQARDPEEKYFCLSSNNDTEWDKDIMLIRLNRSVRNSKHIAPLSLPSSPPSVGSVCRIMGWGAITSPNETYPDVPYCANIKLLRYSLCRVYQRMPAQSRILCAGILQGGKGICKGDSGGPLICNGQFQGIVHGGGKTCAQPYEPGLYIKVFDYTDWIQNIIAGNTTATCPP.

Residues 1 to 18 (MVLIRVLANLLILQLSYA) form the signal peptide. A propeptide spanning residues 19 to 24 (QKSSEL) is cleaved from the precursor. Positions 25-248 (VIGGDECNIN…YTDWIQNIIA (224 aa)) constitute a Peptidase S1 domain. Intrachain disulfides connect Cys-31-Cys-163, Cys-50-Cys-66, Cys-98-Cys-255, Cys-142-Cys-209, Cys-174-Cys-188, and Cys-199-Cys-224. Asn-44 is a glycosylation site (N-linked (GlcNAc...) asparagine). Residue His-65 is the Charge relay system of the active site. Asn-103 is a glycosylation site (N-linked (GlcNAc...) asparagine). Residue Asp-110 is the Charge relay system of the active site. Residues Asn-117 and Asn-154 are each glycosylated (N-linked (GlcNAc...) asparagine). Ser-203 acts as the Charge relay system in catalysis. Residue Asn-250 is glycosylated (N-linked (GlcNAc...) asparagine).

It belongs to the peptidase S1 family. Snake venom subfamily. In terms of assembly, monomer. In terms of tissue distribution, expressed by the venom gland.

The protein resides in the secreted. Functionally, snake venom serine protease that may act in the hemostasis system of the prey. This chain is Snake venom serine protease 3 (TLF3), found in Protobothrops flavoviridis (Habu).